The following is a 351-amino-acid chain: Serine/threonine-protein kinase ZRK1 (351 aa).

The Protein kinase domain maps to 60 to 347 (FDSSCFVSQD…KELKQIEASL (288 aa)). Residues 66–74 (VSQDVYYKW) and lysine 87 each bind ATP. Aspartate 191 (proton acceptor) is an active-site residue.

The protein belongs to the protein kinase superfamily. Ser/Thr protein kinase family. ZRK subfamily. As to quaternary structure, component of a stable high-order oligomeric complex made of RKS1 and RPP13L4/ZAR1 which recruits Xanthomonas campestris effector XopAC/AvrAC-mediated uridylylated PBL2 in the presence of ATP to form a wheel-like pentameric resistosome; this complex triggers immunity toward X.campestris in vascular tissues. Interacts with RPP13L4/ZAR1 and uridylylated PBL2. In terms of tissue distribution, expressed at high levels in germinating seeds and at lower levels in adult leaves.

It catalyses the reaction L-seryl-[protein] + ATP = O-phospho-L-seryl-[protein] + ADP + H(+). The catalysed reaction is L-threonyl-[protein] + ATP = O-phospho-L-threonyl-[protein] + ADP + H(+). In terms of biological role, serine/threonine-protein kinase that confers a broad-spectrum quantitative disease resistance (QDR) to the pathogenic biotrophic bacteria Xanthomonas campestris (e.g. pv. campestris (Xcc), pv. raphani, pv. armoriaceae and pv. incanae) by restricting bacterial spread to the vascular system from the infection site; X.campestris causes black rot disease in crops. Seems to not have any kinase activity. This Arabidopsis thaliana (Mouse-ear cress) protein is Serine/threonine-protein kinase ZRK1.